Here is a 154-residue protein sequence, read N- to C-terminus: MIVGIGTDIVQVSRMTALLGRYGERFPRRILTGDEFKKFSVSKQPAYFLAKRFAAKEAAAKALGTGFGSGLRPCHIGVGHTERGQPFLEWQGRANELVRILGVSRGLLSLADEKEYALAFVTLLAEREGAKPGLSLERALNSLKLSGNGNGVTD.

Residues Asp-8 and Glu-57 each coordinate Mg(2+).

It belongs to the P-Pant transferase superfamily. AcpS family. Requires Mg(2+) as cofactor.

The protein localises to the cytoplasm. It carries out the reaction apo-[ACP] + CoA = holo-[ACP] + adenosine 3',5'-bisphosphate + H(+). In terms of biological role, transfers the 4'-phosphopantetheine moiety from coenzyme A to a Ser of acyl-carrier-protein. The chain is Holo-[acyl-carrier-protein] synthase from Nitrosococcus oceani (strain ATCC 19707 / BCRC 17464 / JCM 30415 / NCIMB 11848 / C-107).